The following is a 428-amino-acid chain: Enolase (428 aa).

Q163 is a binding site for (2R)-2-phosphoglycerate. The active-site Proton donor is E205. Residues D242, E286, and D313 each coordinate Mg(2+). 4 residues coordinate (2R)-2-phosphoglycerate: K338, R367, S368, and K389. The active-site Proton acceptor is the K338.

This sequence belongs to the enolase family. Mg(2+) is required as a cofactor.

The protein localises to the cytoplasm. It localises to the secreted. Its subcellular location is the cell surface. The catalysed reaction is (2R)-2-phosphoglycerate = phosphoenolpyruvate + H2O. It participates in carbohydrate degradation; glycolysis; pyruvate from D-glyceraldehyde 3-phosphate: step 4/5. Functionally, catalyzes the reversible conversion of 2-phosphoglycerate (2-PG) into phosphoenolpyruvate (PEP). It is essential for the degradation of carbohydrates via glycolysis. The chain is Enolase from Acidovorax ebreus (strain TPSY) (Diaphorobacter sp. (strain TPSY)).